An 87-amino-acid polypeptide reads, in one-letter code: Small ribosomal subunit protein uS15c (87 aa).

This sequence belongs to the universal ribosomal protein uS15 family. Part of the 30S ribosomal subunit.

It localises to the plastid. The protein resides in the chloroplast. The polypeptide is Small ribosomal subunit protein uS15c (rps15) (Coffea arabica (Arabian coffee)).